The following is a 612-amino-acid chain: uncharacterized protein (612 aa).

The segment at 213–238 is disordered; the sequence is ASAEDGEEAAAGAGKRQVARSGARKR. One can recognise a VWFA domain in the interval 421–610; the sequence is DLACLLLADL…ERLLQLYRRL (190 aa).

The protein resides in the cytoplasm. Its function is as follows. Component of the anaerobic respiratory chain that transforms nitrate to dinitrogen (denitrification). Function unknown, but essential for the denitrification process. This is an uncharacterized protein from Pseudomonas aeruginosa (strain ATCC 15692 / DSM 22644 / CIP 104116 / JCM 14847 / LMG 12228 / 1C / PRS 101 / PAO1).